The primary structure comprises 263 residues: 4-hydroxy-tetrahydrodipicolinate reductase (263 aa).

NAD(+) contacts are provided by residues 8–13, D34, 99–101, and 125–128; these read GACGRM, GTT, and SPNY. The active-site Proton donor/acceptor is H157. Position 158 (H158) interacts with (S)-2,3,4,5-tetrahydrodipicolinate. K161 (proton donor) is an active-site residue. 167–168 provides a ligand contact to (S)-2,3,4,5-tetrahydrodipicolinate; it reads GT.

Belongs to the DapB family.

Its subcellular location is the cytoplasm. It catalyses the reaction (S)-2,3,4,5-tetrahydrodipicolinate + NAD(+) + H2O = (2S,4S)-4-hydroxy-2,3,4,5-tetrahydrodipicolinate + NADH + H(+). The catalysed reaction is (S)-2,3,4,5-tetrahydrodipicolinate + NADP(+) + H2O = (2S,4S)-4-hydroxy-2,3,4,5-tetrahydrodipicolinate + NADPH + H(+). It participates in amino-acid biosynthesis; L-lysine biosynthesis via DAP pathway; (S)-tetrahydrodipicolinate from L-aspartate: step 4/4. Catalyzes the conversion of 4-hydroxy-tetrahydrodipicolinate (HTPA) to tetrahydrodipicolinate. The sequence is that of 4-hydroxy-tetrahydrodipicolinate reductase from Methanosarcina barkeri (strain Fusaro / DSM 804).